Reading from the N-terminus, the 1088-residue chain is RNA-directed RNA polymerase (1088 aa).

The 187-residue stretch at 501-687 (LSYGDVTRFL…AKRYIAGGKI (187 aa)) folds into the RdRp catalytic domain.

This sequence belongs to the reoviridae RNA-directed RNA polymerase family. Interacts with VP3 (Potential). Interacts with VP2; this interaction activates VP1. Interacts with NSP5; this interaction is probably necessary for the formation of functional virus factories. Interacts with NSP2; this interaction is weak. Requires Mg(2+) as cofactor.

It is found in the virion. The catalysed reaction is RNA(n) + a ribonucleoside 5'-triphosphate = RNA(n+1) + diphosphate. Its function is as follows. RNA-directed RNA polymerase that is involved in both transcription and genome replication. Together with VP3 capping enzyme, forms an enzyme complex positioned near the channels situated at each of the five-fold vertices of the core. Following infection, the outermost layer of the virus is lost, leaving a double-layered particle (DLP) made up of the core and VP6 shell. VP1 then catalyzes the transcription of fully conservative plus-strand genomic RNAs that are extruded through the DLP's channels into the cytoplasm where they function as mRNAs for translation of viral proteins. One copy of each of the viral (+)RNAs is also recruited during core assembly, together with newly synthesized polymerase complexes and VP2. The polymerase of these novo-formed particles catalyzes the synthesis of complementary minus-strands leading to dsRNA formation. To do so, the polymerase specifically recognizes and binds 4 bases 5'-UGUG-3' in the conserved 3'-sequence of plus-strand RNA templates. VP2 presumably activates the autoinhibited VP1-RNA complex to coordinate packaging and genome replication. Once dsRNA synthesis is complete, the polymerase switches to the transcriptional mode, thus providing secondary transcription. The protein is RNA-directed RNA polymerase of Homo sapiens (Human).